The chain runs to 175 residues: Macro domain-containing protein TTE0995 (175 aa).

Residues 1-174 (MKEKIKLIKG…VYSKAYEELD (174 aa)) enclose the Macro domain.

Belongs to the MacroD-type family.

The chain is Macro domain-containing protein TTE0995 from Caldanaerobacter subterraneus subsp. tengcongensis (strain DSM 15242 / JCM 11007 / NBRC 100824 / MB4) (Thermoanaerobacter tengcongensis).